Reading from the N-terminus, the 317-residue chain is MAELACFCYPHLENDSYRFIPFNSLAIKCMLTAKVDKKDQDKFYNSIIYGIAPPPQFKKRYNTNDNSRGMNYETPMFNKVAVLICEALNSIKVTQSDVASVLSKVISVRHLENLVLRRENHQDVLFHSKELLLRSVLIAIGHSKEIETTATAEGGEVVFQNAAFTMWKLTYLEHRLMPILDQNFIEYKITVNEDKPISESHVRELIAELRWQYNKFAVITHGKGHYRVVKYSSVANHADRVYATFKSNNKNGNVIEFNLLDQRIIWQNWYAFTSSMKQGNTLEICKKLLFQKMKRESNPFKGLSTDRKMDEVSQIGI.

ATP-binding positions include 107–109 (SVR), Lys188, and 221–223 (HGK). An RNA-binding region spans residues 205–241 (LIAELRWQYNKFAVITHGKGHYRVVKYSSVANHADRV). Catalysis depends on His225, which acts as the For NTPase and RTPase activities. Arg227 lines the ATP pocket.

The protein belongs to the rotavirus NSP2 family. As to quaternary structure, homooctamer. Interacts with VP1; this interaction is weak. Interacts with NSP5; this interaction leads to up-regulation of NSP5 phosphorylation and formation of viral factories. Interacts with host DCP1A, DCP1B, DDX6, EDC4 and EIF2S1/eIF2-alpha; these interactions are probably part of the sequestration of some host SGs and PBs proteins in viral factories. It depends on Mg(2+) as a cofactor.

The protein localises to the host cytoplasm. Participates in replication and packaging of the viral genome. Plays a crucial role, together with NSP5, in the formation of virus factories (viroplasms), which are large inclusions in the host cytoplasm where replication intermediates are assembled and viral RNA replication takes place. Displays ssRNA binding, NTPase, RNA triphosphatase (RTPase) and ATP-independent helix-unwinding activities. The unwinding activity may prepare and organize plus-strand RNAs for packaging and replication by removing interfering secondary structures. The RTPase activity plays a role in the removal of the gamma-phosphate from the rotavirus RNA minus strands of dsRNA genome segments. Participates in the selective exclusion of host proteins from stress granules (SG) and P bodies (PB). Also participates in the sequestration of these remodeled organelles in viral factories. This chain is Non-structural protein 2, found in Bos taurus (Bovine).